Here is a 414-residue protein sequence, read N- to C-terminus: Protein RecA (414 aa).

78 to 85 (GPESSGKT) contributes to the ATP binding site. Residues 361–384 (QEKAVEALKKEEGSKEDALTGNKD) are compositionally biased toward basic and acidic residues. Positions 361–414 (QEKAVEALKKEEGSKEDALTGNKDETDDSAQKNSAASKAKRAEVVGLPADDSLF) are disordered.

This sequence belongs to the RecA family.

It localises to the cytoplasm. Can catalyze the hydrolysis of ATP in the presence of single-stranded DNA, the ATP-dependent uptake of single-stranded DNA by duplex DNA, and the ATP-dependent hybridization of homologous single-stranded DNAs. It interacts with LexA causing its activation and leading to its autocatalytic cleavage. In Treponema denticola (strain ATCC 35405 / DSM 14222 / CIP 103919 / JCM 8153 / KCTC 15104), this protein is Protein RecA.